We begin with the raw amino-acid sequence, 414 residues long: Argininosuccinate synthase (414 aa).

Residues 9 to 17 (AYSGGLDTS) and Ala35 each bind ATP. Positions 86 and 91 each coordinate L-citrulline. 114–122 (SHGATGKGN) is an ATP binding site. The L-aspartate site is built by Thr118, Asn122, and Asp123. Position 122 (Asn122) interacts with L-citrulline. L-citrulline is bound by residues Arg126, Ser179, Ser188, Glu269, and Tyr281.

This sequence belongs to the argininosuccinate synthase family. As to quaternary structure, homotetramer.

It is found in the cytoplasm. Its subcellular location is the cytosol. The enzyme catalyses L-citrulline + L-aspartate + ATP = 2-(N(omega)-L-arginino)succinate + AMP + diphosphate + H(+). It participates in amino-acid biosynthesis; L-arginine biosynthesis; L-arginine from L-ornithine and carbamoyl phosphate: step 2/3. The protein operates within nitrogen metabolism; urea cycle; (N(omega)-L-arginino)succinate from L-aspartate and L-citrulline: step 1/1. Functionally, one of the enzymes of the urea cycle, the metabolic pathway transforming neurotoxic amonia produced by protein catabolism into inocuous urea in the liver of ureotelic animals. Catalyzes the formation of arginosuccinate from aspartate, citrulline and ATP and together with ASL it is responsible for the biosynthesis of arginine in most body tissues. The sequence is that of Argininosuccinate synthase from Danio rerio (Zebrafish).